A 238-amino-acid polypeptide reads, in one-letter code: Probable 2-phosphosulfolactate phosphatase (238 aa).

This sequence belongs to the ComB family. Requires Mg(2+) as cofactor.

It carries out the reaction (2R)-O-phospho-3-sulfolactate + H2O = (2R)-3-sulfolactate + phosphate. The polypeptide is Probable 2-phosphosulfolactate phosphatase (Carboxydothermus hydrogenoformans (strain ATCC BAA-161 / DSM 6008 / Z-2901)).